Reading from the N-terminus, the 275-residue chain is Anamorsin homolog (275 aa).

The interval 1–147 (MTSASIHIGS…QSASSAAATG (147 aa)) is N-terminal SAM-like domain. The tract at residues 148–183 (RINLGGAKTKVKLSLDDDDDDQLIDEDDLLNGGGGM) is linker. [2Fe-2S] cluster contacts are provided by Cys203, Cys209, Cys212, and Cys214. The interval 203 to 214 (CGGRKACDNCTC) is fe-S binding site A. Residues Cys238, Cys241, Cys249, and Cys252 each contribute to the [4Fe-4S] cluster site. Short sequence motifs (cx2C motif) lie at residues 238-241 (CGNC) and 249-252 (CAGC). The fe-S binding site B stretch occupies residues 238–252 (CGNCAKGDAFRCAGC).

This sequence belongs to the anamorsin family. Monomer. Requires [2Fe-2S] cluster as cofactor. It depends on [4Fe-4S] cluster as a cofactor.

The protein resides in the cytoplasm. Its subcellular location is the mitochondrion intermembrane space. Functionally, component of the cytosolic iron-sulfur (Fe-S) protein assembly (CIA) machinery. Required for the maturation of extramitochondrial Fe-S proteins. Part of an electron transfer chain functioning in an early step of cytosolic Fe-S biogenesis, facilitating the de novo assembly of a [4Fe-4S] cluster on the cytosolic Fe-S scaffold complex. Electrons are transferred from NADPH via a FAD- and FMN-containing diflavin oxidoreductase. Together with the diflavin oxidoreductase, also required for the assembly of the diferric tyrosyl radical cofactor of ribonucleotide reductase (RNR), probably by providing electrons for reduction during radical cofactor maturation in the catalytic small subunit. The sequence is that of Anamorsin homolog from Thalassiosira pseudonana (Marine diatom).